A 350-amino-acid chain; its full sequence is DNA primase small subunit PriS (350 aa).

Catalysis depends on residues Asp-97, Asp-99, and Asp-251.

This sequence belongs to the eukaryotic-type primase small subunit family. Heterodimer of a small subunit (PriS) and a large subunit (PriL). Mg(2+) is required as a cofactor. It depends on Mn(2+) as a cofactor. Zn(2+) serves as cofactor.

In terms of biological role, catalytic subunit of DNA primase, an RNA polymerase that catalyzes the synthesis of short RNA molecules used as primers for DNA polymerase during DNA replication. The small subunit contains the primase catalytic core and has DNA synthesis activity on its own. Binding to the large subunit stabilizes and modulates the activity, increasing the rate of DNA synthesis while decreasing the length of the DNA fragments, and conferring RNA synthesis capability. The DNA polymerase activity may enable DNA primase to also catalyze primer extension after primer synthesis. May also play a role in DNA repair. This is DNA primase small subunit PriS from Methanocaldococcus jannaschii (strain ATCC 43067 / DSM 2661 / JAL-1 / JCM 10045 / NBRC 100440) (Methanococcus jannaschii).